Here is a 425-residue protein sequence, read N- to C-terminus: Actin-related protein 3 (425 aa).

Belongs to the actin family. ARP3 subfamily. In terms of assembly, component of the Arp2/3 complex, at least composed of arx-1, arx-2, arx-4 and arx-6.

The protein resides in the cytoplasm. The protein localises to the cytoskeleton. In terms of biological role, functions as ATP-binding component of the Arp2/3 complex which is involved in regulation of actin polymerization and together with an activating nucleation-promoting factor (NPF) mediates the formation of branched actin networks. Seems to contact the pointed end of the daughter actin filament. Plays a role in time-dependent memory loss and the retention of conditioned behavior over time. This is Actin-related protein 3 from Caenorhabditis elegans.